We begin with the raw amino-acid sequence, 292 residues long: Tetratricopeptide repeat protein 1 (292 aa).

Composition is skewed to basic and acidic residues over residues 1-12 and 47-64; these read MEEKSEDCKVPE and KAAEAHPQDDHVEEECFH. The interval 1–125 is disordered; it reads MEEKSEDCKV…SAKLKEEGNE (125 aa). Over residues 88 to 98 the composition is skewed to acidic residues; that stretch reads SSSELDEEYLI. A Phosphoserine modification is found at serine 90. Positions 99-125 are enriched in basic and acidic residues; that stretch reads ELEKNMPEEEKQKRREESAKLKEEGNE. 3 TPR repeats span residues 116–149, 155–188, and 189–222; these read SAKLKEEGNERFKRGDYMEAESSYSQALQMCPAC, SVLFSNRAAARMKQDKKETAITDCSKAIQLNPTY, and IRAILRRAELYEKTDKLDEALEDYKSVLEKDPSV.

In terms of assembly, interacts with the GAP domain of NF1. Interacts (via TPR repeats) with HSP90AA1 and HSPA8.

This Mus musculus (Mouse) protein is Tetratricopeptide repeat protein 1 (Ttc1).